The primary structure comprises 351 residues: tRNA-specific 2-thiouridylase MnmA (351 aa).

ATP contacts are provided by residues 7 to 14 (GLSGGVDS) and leucine 33. The Nucleophile role is filled by cysteine 94. Cysteine 94 and cysteine 193 form a disulfide bridge. ATP is bound at residue glycine 119. Residues 143–145 (KDQ) are interaction with tRNA. The active-site Cysteine persulfide intermediate is cysteine 193. An interaction with tRNA region spans residues 298-299 (RY).

It belongs to the MnmA/TRMU family.

Its subcellular location is the cytoplasm. It catalyses the reaction S-sulfanyl-L-cysteinyl-[protein] + uridine(34) in tRNA + AH2 + ATP = 2-thiouridine(34) in tRNA + L-cysteinyl-[protein] + A + AMP + diphosphate + H(+). Functionally, catalyzes the 2-thiolation of uridine at the wobble position (U34) of tRNA, leading to the formation of s(2)U34. In Nostoc punctiforme (strain ATCC 29133 / PCC 73102), this protein is tRNA-specific 2-thiouridylase MnmA.